The sequence spans 223 residues: Alpha-S2-casein (223 aa).

The first 15 residues, 1–15, serve as a signal peptide directing secretion; that stretch reads MKFFIFTCLLAVALA. Ser-23, Ser-24, Ser-25, Ser-72, Ser-73, Ser-74, Ser-77, Ser-145, Ser-147, Ser-151, and Ser-159 each carry phosphoserine. A repeat spans 77 to 141; that stretch reads SAEVAPEEVK…AGPFTPTVNR (65 aa). The segment at residues 159–223 is a repeat; that stretch reads STEVFTKKTK…TNAIPYVRYL (65 aa).

Belongs to the alpha-casein family. Mammary gland specific. Secreted in milk.

Its subcellular location is the secreted. Its function is as follows. Important role in the capacity of milk to transport calcium phosphate. In Ovis aries (Sheep), this protein is Alpha-S2-casein (CSN1S2).